Consider the following 360-residue polypeptide: Cannabinoid receptor 2 (360 aa).

Residues methionine 1–lysine 33 are Extracellular-facing. The N-linked (GlcNAc...) asparagine glycan is linked to asparagine 11. The chain crosses the membrane as a helical span at residues threonine 34–leucine 59. At serine 60–leucine 71 the chain is on the cytoplasmic side. Residues phenylalanine 72–valine 92 form a helical membrane-spanning segment. At asparagine 93 to alanine 104 the chain is on the extracellular side. The chain crosses the membrane as a helical span at residues valine 105–isoleucine 129. Topologically, residues aspartate 130–arginine 149 are cytoplasmic. Residues alanine 150–tryptophan 172 form a helical membrane-spanning segment. The Extracellular segment spans residues threonine 173 to asparagine 188. A helical transmembrane segment spans residues aspartate 189–tryptophan 214. At lysine 215–threonine 246 the chain is on the cytoplasmic side. The chain crosses the membrane as a helical span at residues leucine 247–histidine 267. At serine 268–lysine 279 the chain is on the extracellular side. A helical transmembrane segment spans residues alanine 280 to leucine 301. Residues arginine 302 to cysteine 360 are Cytoplasmic-facing. Residues glutamate 327 to cysteine 360 are disordered. Phosphoserine occurs at positions 335 and 336. Threonine 338 bears the Phosphothreonine mark. Residues aspartate 351–cysteine 360 show a composition bias toward basic and acidic residues. At serine 352 the chain carries Phosphoserine.

It belongs to the G-protein coupled receptor 1 family. In terms of processing, constitutively phosphorylated on Ser-352; phosphorylation increases cell internalization and desensitizes the receptor. In terms of tissue distribution, preferentially expressed in cells of the immune system with higher expression in B-cells and NK cells (at protein level). Expressed in skin in suprabasal layers and hair follicles (at protein level). Highly expressed in tonsil and to a lower extent in spleen, peripheral blood mononuclear cells, and thymus. PubMed:14657172 could not detect expression in normal brain. Expressed in brain by perivascular microglial cells and dorsal root ganglion sensory neurons (at protein level). Two isoforms are produced by alternative promoter usage and differ only in the 5' UTR: isoform CB2A is observed predominantly in testis with some expression in brain, while isoform CB2B is predominant in spleen and leukocytes.

The protein resides in the cell membrane. It is found in the cell projection. The protein localises to the dendrite. Its subcellular location is the perikaryon. In terms of biological role, heterotrimeric G protein-coupled receptor for endocannabinoid 2-arachidonoylglycerol mediating inhibition of adenylate cyclase. May function in inflammatory response, nociceptive transmission and bone homeostasis. This is Cannabinoid receptor 2 (CNR2) from Homo sapiens (Human).